The chain runs to 195 residues: Calcineurin B homologous protein 1 (195 aa).

G2 carries N-myristoyl glycine lipidation. The Necessary for association with microtubule and interaction with GAPDH signature appears at 2 to 6 (GSRAS). 4 EF-hand domains span residues 26–61 (SQITRLYSRFTSLDKGENGTLSREDFQRIPELAINP), 71–106 (FSEGEDQVNFRGFMRTLAHFRPIEDNEKSKDVNGPE), 110–145 (SRSNKLHFAFRLYDLDKDDKISRDELLQVLRMMVGV), and 151–186 (QLGSIADRTIQEADQDGDSAISFTEFVKVLEKVDVE). 5 residues coordinate Ca(2+): D123, D125, D127, K129, and E134. Residues 138–147 (VLRMMVGVNI) carry the Nuclear export signal 1 motif. D164, D166, D168, and E175 together coordinate Ca(2+). Residues 176–185 (FVKVLEKVDV) carry the Nuclear export signal 2 motif.

It belongs to the calcineurin regulatory subunit family. CHP subfamily. In terms of assembly, monomer. Interacts with STK17B; the interaction occurs in a calcium-independent manner and induces the translocation of CHP1 from the Golgi to the nucleus. Interacts with GAPDH; the interaction is direct, occurs in a N-myristoylation-dependent manner and facilitates the ability of CHP1 to bind microtubules. Interacts with KIF1B (via the C-terminal end of the kinesin-motor domain); the interaction occurs in a calcium-dependent manner. Associates (via C-terminal domain) with microtubules; the association occurs with polymerized microtubules during the cell cycle in a myristoylation- and calcium-independent manner and is enhanced by GAPDH. Interacts with PPP3CA. Interacts with SLC9A1/NHE1 (via the cytoplasmic C-terminal domain); the interaction occurs at the plasma membrane in a calcium-dependent manner and at a domain that is critical for growth factor stimulation of the exchanger. Interacts with SLC9A3; increases SLC9A3 trafficking and activity at the plasma membrane. In terms of processing, phosphorylated; decreased phosphorylation is associated with an increase in SLC9A1/NHE1 Na(+)/H(+) exchange activity. Phosphorylation occurs in serum-dependent manner. The phosphorylation state may regulate the binding to SLC9A1/NHE1. Post-translationally, both N-myristoylation and calcium-mediated conformational changes are essential for its function in exocytic traffic. N-myristoylation is required for its association with microtubules and interaction with GAPDH, but not for the constitutive association to membranes.

The protein resides in the nucleus. The protein localises to the cytoplasm. It is found in the cytoskeleton. It localises to the endomembrane system. Its subcellular location is the endoplasmic reticulum-Golgi intermediate compartment. The protein resides in the endoplasmic reticulum. The protein localises to the cell membrane. It is found in the membrane. Functionally, calcium-binding protein involved in different processes such as regulation of vesicular trafficking, plasma membrane Na(+)/H(+) exchanger and gene transcription. Involved in the constitutive exocytic membrane traffic. Mediates the association between microtubules and membrane-bound organelles of the endoplasmic reticulum and Golgi apparatus and is also required for the targeting and fusion of transcytotic vesicles (TCV) with the plasma membrane. Functions as an integral cofactor in cell pH regulation by controlling plasma membrane-type Na(+)/H(+) exchange activity. Affects the pH sensitivity of SLC9A1/NHE1 by increasing its sensitivity at acidic pH. Required for the stabilization and localization of SLC9A1/NHE1 at the plasma membranes. Inhibits serum- and GTPase-stimulated Na(+)/H(+) exchange. Plays a role as an inhibitor of ribosomal RNA transcription by repressing the nucleolar UBF1 transcriptional activity. May sequester UBF1 in the nucleoplasm and limit its translocation to the nucleolus. Associates to the ribosomal gene promoter. Acts as a negative regulator of the calcineurin/NFAT signaling pathway. Inhibits NFAT nuclear translocation and transcriptional activity by suppressing the calcium-dependent calcineurin phosphatase activity. Also negatively regulates the kinase activity of the apoptosis-induced kinase STK17B. Inhibits both STK17B auto- and substrate-phosphorylations in a calcium-dependent manner. The protein is Calcineurin B homologous protein 1 (Chp1) of Mus musculus (Mouse).